The chain runs to 305 residues: Elongation factor Ts (305 aa).

The segment at 79 to 82 (TDFV) is involved in Mg(2+) ion dislocation from EF-Tu.

It belongs to the EF-Ts family.

The protein resides in the cytoplasm. Its function is as follows. Associates with the EF-Tu.GDP complex and induces the exchange of GDP to GTP. It remains bound to the aminoacyl-tRNA.EF-Tu.GTP complex up to the GTP hydrolysis stage on the ribosome. The sequence is that of Elongation factor Ts from Brucella suis biovar 1 (strain 1330).